Consider the following 242-residue polypeptide: MGRGPSIEGRKNASDAKRGKMFTKIIREISVAARAGGGDPSNNPRLRTAMDKGLSANMSKDVIERAIKKSTGELEGVEYEEVRYEGYAPGGVAVIVDCLTDNRVRTVADVRHAFSKCGGNMGTEGSVAFMFKRLGVLSFAAGIDEDTLTDAAIEAGADDVVVYPEDGAIDVLTAPDAFAQVRDALAAAGLEPAHAEIVFRADNDIAVDGDTAVQVRKLLDMLEDLDDVQDVYSNVDQAALGA.

The protein belongs to the TACO1 family.

Its subcellular location is the cytoplasm. This chain is Probable transcriptional regulatory protein XOO1543, found in Xanthomonas oryzae pv. oryzae (strain MAFF 311018).